The primary structure comprises 440 residues: MRNYRGSKVVIIGLGITGLSCVNFFLDRGVIPKVIDTRIYPPGIKKIPHVVQCYLGAFNDIWLLSATLIVVSPGVRLDHPVLIEALKLGIEIIGDIELFTREATAPIIAITGSNGKSTVTQLVSRMARIAGWHVGVAGNIGVPVLSLLNKSYQLYILEISSFQLDTTYSLRAIAAAILNVSEDHMDHYPGGLKQYWFSKQRIYKNAKICVMNALDFLTIPIYHEYDYCISFGENEDSADYYLKYYKGHTWIVAYNEYVLNCSEMRINNRINYINALSALALSDIIKIPRSVSLKVLCQFSGLAHRCQLIYKNHGVSWINDSKATNVSATKEAINNLKLCGTLHLILGGDGKLADFSSLKHLIKQHEIHLYCFGKDGLLLTTLGFSDVILTNTMIQAMRIINRRIKAKDIVLLSPACSSLDQFKSFEMRGLIFTCFAREFR.

112 to 118 (GSNGKST) provides a ligand contact to ATP.

Belongs to the MurCDEF family.

It is found in the cytoplasm. The enzyme catalyses UDP-N-acetyl-alpha-D-muramoyl-L-alanine + D-glutamate + ATP = UDP-N-acetyl-alpha-D-muramoyl-L-alanyl-D-glutamate + ADP + phosphate + H(+). It participates in cell wall biogenesis; peptidoglycan biosynthesis. In terms of biological role, cell wall formation. Catalyzes the addition of glutamate to the nucleotide precursor UDP-N-acetylmuramoyl-L-alanine (UMA). The polypeptide is UDP-N-acetylmuramoylalanine--D-glutamate ligase (Blochmanniella pennsylvanica (strain BPEN)).